Consider the following 614-residue polypeptide: Two-component response regulator ORR33 (614 aa).

The Response regulatory domain occupies 14–139; sequence RVMIIDDDAK…VMARLWRVVA (126 aa). Residue D67 is modified to 4-aspartylphosphate. Residues 193 to 220 form a disordered region; the sequence is RQLTINVVDDGNRGSGSGGGGGGGADAN. Over residues 205–217 the composition is skewed to gly residues; it reads RGSGSGGGGGGGA.

The protein belongs to the ARR family. Type-B subfamily. In terms of processing, two-component system major event consists of a His-to-Asp phosphorelay between a sensor histidine kinase (HK) and a response regulator (RR). In plants, the His-to-Asp phosphorelay involves an additional intermediate named Histidine-containing phosphotransfer protein (HPt). This multistep phosphorelay consists of a His-Asp-His-Asp sequential transfer of a phosphate group between first a His and an Asp of the HK protein, followed by the transfer to a conserved His of the HPt protein and finally the transfer to an Asp in the receiver domain of the RR protein.

In terms of biological role, functions as a response regulator involved in His-to-Asp phosphorelay signal transduction system. Phosphorylation of the Asp residue in the receiver domain activates the ability of the protein to promote the transcription of target genes. May directly activate some type-A response regulators in response to cytokinins. This Oryza sativa subsp. indica (Rice) protein is Two-component response regulator ORR33.